A 145-amino-acid polypeptide reads, in one-letter code: Protein FAM216B (145 aa).

A disordered region spans residues 92–121; the sequence is TKRASAKAGPHRTVPQRAAGRTRTQPSARP.

This sequence belongs to the FAM216 family.

The sequence is that of Protein FAM216B (FAM216B) from Bos taurus (Bovine).